The chain runs to 493 residues: Ketol-acid reductoisomerase (NADP(+)) (493 aa).

A KARI N-terminal Rossmann domain is found at alanine 15–serine 208. NADP(+) contacts are provided by residues cysteine 45–glutamine 48, arginine 68, arginine 76, serine 78, and aspartate 108–glutamine 110. Residue histidine 132 is part of the active site. Glycine 158 provides a ligand contact to NADP(+). KARI C-terminal knotted domains lie at serine 209–alanine 344 and phenylalanine 345–methionine 486. Positions 217, 221, 389, and 393 each coordinate Mg(2+). Serine 414 lines the substrate pocket.

It belongs to the ketol-acid reductoisomerase family. It depends on Mg(2+) as a cofactor.

The enzyme catalyses (2R)-2,3-dihydroxy-3-methylbutanoate + NADP(+) = (2S)-2-acetolactate + NADPH + H(+). The catalysed reaction is (2R,3R)-2,3-dihydroxy-3-methylpentanoate + NADP(+) = (S)-2-ethyl-2-hydroxy-3-oxobutanoate + NADPH + H(+). It participates in amino-acid biosynthesis; L-isoleucine biosynthesis; L-isoleucine from 2-oxobutanoate: step 2/4. Its pathway is amino-acid biosynthesis; L-valine biosynthesis; L-valine from pyruvate: step 2/4. In terms of biological role, involved in the biosynthesis of branched-chain amino acids (BCAA). Catalyzes an alkyl-migration followed by a ketol-acid reduction of (S)-2-acetolactate (S2AL) to yield (R)-2,3-dihydroxy-isovalerate. In the isomerase reaction, S2AL is rearranged via a Mg-dependent methyl migration to produce 3-hydroxy-3-methyl-2-ketobutyrate (HMKB). In the reductase reaction, this 2-ketoacid undergoes a metal-dependent reduction by NADPH to yield (R)-2,3-dihydroxy-isovalerate. This is Ketol-acid reductoisomerase (NADP(+)) from Aeromonas salmonicida (strain A449).